The chain runs to 334 residues: MPYINNFLVGPIGLGLKSLTWTENPVPDEEAFRIMNYALSHGCSFWDAGEFYGLSEPLANLQLLSRYFQKFPDSIDKVFLSVKGAFDPETHRVHGTRECITKSIKTVRETLKKVKTIDLYQCAAIDPDTPIEETMACLKEFVDSGDIRCIGLCEPSVEEIKRAHSVVRIAAIEVHYSMLFREIEYNGVKKLCHDLSIPLVAHSPLAHGLLTGRVTTMADIENLKKHHQCNEQPPSSTFSSTLPCIQALKELASKYDMSLAELALSFILSAGRGRILPIPSATSYDLIEASLGSFSKVLDTYQFAEVVSCLEKTLPPPASPNSEPQVTGGCSSMC.

Residue Tyr-52 is the Proton donor of the active site. The interval 314 to 334 (LPPPASPNSEPQVTGGCSSMC) is disordered. Positions 320-334 (PNSEPQVTGGCSSMC) are enriched in polar residues.

It belongs to the aldo/keto reductase family.

Its subcellular location is the cytoplasm. The protein localises to the nucleus. This is an uncharacterized protein from Schizosaccharomyces pombe (strain 972 / ATCC 24843) (Fission yeast).